The primary structure comprises 325 residues: Adenine deaminase (325 aa).

Zn(2+)-binding residues include His11, His13, and His189. Glu192 (proton donor) is an active-site residue. Residue Asp270 coordinates Zn(2+). Asp271 provides a ligand contact to substrate.

The protein belongs to the metallo-dependent hydrolases superfamily. Adenosine and AMP deaminases family. Adenine deaminase type 2 subfamily. Zn(2+) is required as a cofactor.

The catalysed reaction is adenine + H2O + H(+) = hypoxanthine + NH4(+). Catalyzes the hydrolytic deamination of adenine to hypoxanthine. Plays an important role in the purine salvage pathway and in nitrogen catabolism. The protein is Adenine deaminase of Agrobacterium fabrum (strain C58 / ATCC 33970) (Agrobacterium tumefaciens (strain C58)).